The sequence spans 358 residues: Vesicular integral-membrane protein VIP36 (358 aa).

An N-terminal signal peptide occupies residues 1–46 (MAAEAWLWRWGWGWGQRCPGRPGLPGPGPSPTTFLHLLLLLGPVAA). Residues 47–324 (DITDGNSEHL…FRNGPLTGWR (278 aa)) are Lumenal-facing. The L-type lectin-like domain maps to 54–278 (EHLKREHSLI…DIISIKLFQL (225 aa)). Positions 98 and 133 each coordinate a carbohydrate. Ca(2+)-binding residues include Asp164, Tyr166, and Asn168. Position 166 to 168 (166 to 168 (YPN)) interacts with a carbohydrate. N-linked (GlcNAc...) asparagine glycosylation is present at Asn185. Residue His192 participates in a carbohydrate binding. Asp195 contributes to the Ca(2+) binding site. Cysteines 204 and 241 form a disulfide. Residue 262 to 264 (GDL) participates in a carbohydrate binding. A helical membrane pass occupies residues 325-347 (VFLLLLCALLGVVVCAVVGAVVF). Residues 348-358 (QKRQERNKRFY) lie on the Cytoplasmic side of the membrane.

Ca(2+) is required as a cofactor.

The protein localises to the golgi apparatus membrane. Its function is as follows. Plays a role as an intracellular lectin in the early secretory pathway. Interacts with N-acetyl-D-galactosamine and high-mannose type glycans and may also bind to O-linked glycans. Involved in the transport and sorting of glycoproteins carrying high mannose-type glycans. The sequence is that of Vesicular integral-membrane protein VIP36 (Lman2) from Mus musculus (Mouse).